A 97-amino-acid chain; its full sequence is UPF0223 protein lp_2149 (97 aa).

It belongs to the UPF0223 family.

This chain is UPF0223 protein lp_2149, found in Lactiplantibacillus plantarum (strain ATCC BAA-793 / NCIMB 8826 / WCFS1) (Lactobacillus plantarum).